A 239-amino-acid polypeptide reads, in one-letter code: Leucine rich adaptor protein 1 (239 aa).

LRR repeat units follow at residues 55 to 83 (LGDK…LVTL) and 93 to 114 (LLEE…QYSL). Over residues 107–116 (LTSSQYSLTG) the composition is skewed to low complexity. Disordered regions lie at residues 107–139 (LTSS…TDRL) and 200–219 (KPPG…DESA). Ser-118, Ser-126, Ser-129, and Ser-213 each carry phosphoserine.

In terms of assembly, forms a tripartite complex with CDC42BPA/CDC42BPB and MYO18A acting as an adapter connecting both. Its binding to CDC42BPA/CDC42BPB results in their activation by abolition of their negative autoregulation. Interacts with CDC42BPA and CDC42BPB.

The protein resides in the cytoplasm. Functionally, acts as an activator of the canonical NF-kappa-B pathway and drive the production of pro-inflammatory cytokines. Promotes the antigen (Ag)-presenting and priming function of dendritic cells via the canonical NF-kappa-B pathway. In concert with MYO18A and CDC42BPA/CDC42BPB, is involved in modulating lamellar actomyosin retrograde flow that is crucial to cell protrusion and migration. Activates CDC42BPA/CDC42BPB and targets it to actomyosin through its interaction with MYO18A, leading to MYL9/MLC2 phosphorylation and MYH9/MYH10-dependent actomyosin assembly in the lamella. The sequence is that of Leucine rich adaptor protein 1 (LURAP1) from Homo sapiens (Human).